A 1133-amino-acid polypeptide reads, in one-letter code: Exportin-4 (1133 aa).

It belongs to the exportin family. Interacts with Ran and cargo proteins in a GTP-dependent manner.

It is found in the cytoplasm. The protein resides in the nucleus. Mediates the nuclear export of proteins (cargos). In the nucleus binds cooperatively to its cargo and to the GTPase Ran in its active GTP-bound form. Docking of this trimeric complex to the nuclear pore complex (NPC) is mediated through binding to nucleoporins. Upon transit of a nuclear export complex into the cytoplasm, disassembling of the complex and hydrolysis of Ran-GTP to Ran-GDP cause release of the cargo from the export receptor. Xpo4 then return to the nuclear compartment and mediate another round of transport. The directionality of nuclear export is thought to be conferred by an asymmetric distribution of the GTP- and GDP-bound forms of Ran between the cytoplasm and nucleus. In Dictyostelium discoideum (Social amoeba), this protein is Exportin-4 (xpo4).